We begin with the raw amino-acid sequence, 392 residues long: Major outer membrane protein P.IA (392 aa).

The N-terminal stretch at 1-19 (MRKKLTALVLSALPLAAVA) is a signal peptide.

The protein belongs to the Gram-negative porin family. Homotrimer.

It is found in the cell outer membrane. Serves as a slightly cation selective porin. Major antigen on the gonococcal cell surface and it may have pathogenic properties in addition to its porin activity. This chain is Major outer membrane protein P.IA (porA), found in Neisseria meningitidis serogroup B / serotype 15 (strain H44/76).